The primary structure comprises 417 residues: Phosphoglycerate kinase 2 (417 aa).

Phosphoserine is present on S4. K11 is modified (N6-acetyllysine). Positions 23, 24, 25, 26, 38, and 39 each coordinate (2R)-3-phosphoglycerate. N6-acetyllysine is present on K48. (2R)-3-phosphoglycerate-binding residues include S62, H63, G65, and R66. N6-acetyllysine is present on residues K75, K86, and K97. Positions 122 and 123 each coordinate (2R)-3-phosphoglycerate. Residues K131 and K146 each carry the N6-acetyllysine modification. 2 residues coordinate (2R)-3-phosphoglycerate: H170 and R171. Y196 is subject to Phosphotyrosine. K199 bears the N6-acetyllysine mark. An ADP-binding site is contributed by G214. G214 is a CDP binding site. Residues A215 and K216 each coordinate AMP. A215 serves as a coordination point for ATP. Residue A215 coordinates Mg(2+). D219 serves as a coordination point for CDP. D219 provides a ligand contact to Mg(2+). K220 contacts AMP. K220 contributes to the ATP binding site. G238 provides a ligand contact to ADP. Residue G238 coordinates CDP. Residue G239 participates in AMP binding. G239 lines the ATP pocket. An N6-acetyllysine mark is found at K267 and K291. Position 313 (G313) interacts with AMP. G313 is a binding site for ATP. Positions 338, 340, and 343 each coordinate CDP. ADP is bound at residue F343. E344 lines the AMP pocket. Residues E344, D375, and T376 each coordinate ATP. Mg(2+) is bound at residue D375.

Belongs to the phosphoglycerate kinase family. Monomer. Mg(2+) serves as cofactor. As to expression, testis and sperm. Localized on the principle piece in the sperm (at protein level). Testis-specific.

The protein resides in the cytoplasm. It catalyses the reaction (2R)-3-phosphoglycerate + ATP = (2R)-3-phospho-glyceroyl phosphate + ADP. It functions in the pathway carbohydrate degradation; glycolysis; pyruvate from D-glyceraldehyde 3-phosphate: step 2/5. In terms of biological role, essential for sperm motility and male fertility but is not required for the completion of spermatogenesis. The polypeptide is Phosphoglycerate kinase 2 (Pgk2) (Mus musculus (Mouse)).